Here is a 175-residue protein sequence, read N- to C-terminus: COMPASS component SDC1 (175 aa).

Over residues 1–12 (MNESENSPQHNE) the composition is skewed to polar residues. The interval 1–45 (MNESENSPQHNEVTVPMVEDTSSNADIPMEQIQREDNKNYDKHDN) is disordered. Basic and acidic residues predominate over residues 32 to 45 (IQREDNKNYDKHDN). The tract at residues 121–162 (QTRKYLNTNVTPHLLAGMRLIAVQQPEDPLRVLGEYLIEQSN) is DPY-30.

This sequence belongs to the dpy-30 family. Component of the Set1C/COMPASS complex which consists of SET1(2), BRE2(2), SPP1(2), SDC1(1), SHG1(1), SWD1(1), SWD2(1), and SWD3(1). Interacts directly with BRE2.

The protein localises to the nucleus. Component of the Set1C/COMPASS complex that specifically mono-, di- and trimethylates histone H3 to form H3K4me1/2/3, which subsequently plays a role in telomere length maintenance and transcription elongation regulation. COMPASS recognizes ubiquitinated H2B on one face of the nucleosome which stimulates the methylation of H3 on the opposing face. The sequence is that of COMPASS component SDC1 from Saccharomyces cerevisiae (strain ATCC 204508 / S288c) (Baker's yeast).